The following is a 93-amino-acid chain: NADH-dependent phenylglyoxylate dehydrogenase subunit delta (93 aa).

4Fe-4S ferredoxin-type domains are found at residues 39–68 (MRPV…EHAA) and 66–93 (HAAW…RRSR).

Dimer of heteropentamers composed of an alpha (PadG), a beta (PadI), a gamma (PadE), a delta (PadF) and an epsilon (PadH) subunit. [4Fe-4S] cluster serves as cofactor.

The enzyme catalyses phenylglyoxylate + NAD(+) + CoA = benzoyl-CoA + CO2 + NADH. With respect to regulation, activated by magnesium ions and thiamine diphosphate. Functionally, involved in the anaerobic metabolism of phenylalanine and phenylacetate. Catalyzes the oxidative decarboxylation of phenylglyoxylate to benzoyl-CoA and CO(2). It can also react slowly with 2-oxo-3-methylbutanoate and use different electron acceptors such as benzyl viologen, methyl viologen, FAD or FMN, but NAD seems to be the physiological electron acceptor. Also catalyzes an isotope exchange between CO(2) and the carboxyl group which proves partial or complete reversibility of the oxidative decarboxylation reaction. The sequence is that of NADH-dependent phenylglyoxylate dehydrogenase subunit delta (padF) from Aromatoleum evansii (Azoarcus evansii).